We begin with the raw amino-acid sequence, 538 residues long: Transmembrane protein 266 (538 aa).

Over 1-102 the chain is Cytoplasmic; that stretch reads MALVTSFNMA…VFLLSASLNS (102 aa). The helical transmembrane segment at 103–123 threads the bilayer; the sequence is FLVACVILVVILLTLELLIDT. Over 124-130 the chain is Extracellular; it reads KLLQFSN. Residues 131–151 form a helical membrane-spanning segment; the sequence is AFQFAGVIHWISLVILSVFFS. At 152–169 the chain is on the cytoplasmic side; that stretch reads ETVLRIVVLGIWDYIENK. Residues 170-190 traverse the membrane as a helical segment; that stretch reads IEVFDGAVIILSLAPMVASTV. The Extracellular segment spans residues 191 to 199; that stretch reads ANGPRSPWD. The helical transmembrane segment at 200 to 220 threads the bilayer; that stretch reads AISLIIMFRIWRVKRVIDAYV. Topologically, residues 221–538 are cytoplasmic; sequence LPVKLEMEMV…EPKLHTVPEA (318 aa). Residues 232–278 adopt a coiled-coil conformation; that stretch reads QQYEKAKAIQDEQLERLTQICQEQGFEIRQLRAHLAQQDLDLAAERE. Disordered stretches follow at residues 380–435 and 453–483; these read NSTC…PLPL and SSLS…VQTS. Positions 381-396 are enriched in low complexity; that stretch reads STCASATSETTSHSTC. A compositionally biased stretch (polar residues) spans 397-417; the sequence is GSVTRAQSASSQTLGSSTDCS. Positions 425–434 are enriched in low complexity; it reads PSKPRSSPLP.

Homodimer; disulfide-linked. In terms of tissue distribution, in brain, present in the granule layer of the cerebellar cortex. Localizes on the post-synaptic side of glutamatergic mossy fibers and granule cells in the cerebellum (at protein level). As to expression, predominantly expressed in granule cells in cerebellum (at protein level).

Its subcellular location is the cell projection. It is found in the dendrite. It localises to the perikaryon. The protein resides in the cell membrane. In terms of biological role, voltage-sensor protein present on the post-synaptic side of glutamatergic mossy fibers and granule cells in the cerebellum. Despite the presence of a voltage-sensor segment, does not form a functional ion channel and its precise role remains unclear. Undergoes both rapid and slow structural rearrangements in response to changes in voltage. Contains a zinc-binding site that can regulate the slow conformational transition. The protein is Transmembrane protein 266 of Mus musculus (Mouse).